We begin with the raw amino-acid sequence, 284 residues long: Pseudomurein endoisopeptidase PeiW (284 aa).

Pseudomurein-binding repeat stretches follow at residues 4–31 (GLNEFLDMKKRYEDFKMKNKREPRYVTT), 34–65 (GYKVMLPVFKDMLRRYEDFVRINGREPNYISI), 70–100 (NGKIEIKKFRDMLRRYEDFVRINGREPNIIY), and 106–137 (SDHVSLGTFKDMLRRYKDFVRINGREPNYISI). Residues C198, H233, and D250 contribute to the active site.

It belongs to the Psimunavirus Pseudomurein endoisopeptidase family. Monomer. The cofactor is Ca(2+). Mg(2+) is required as a cofactor.

Its function is as follows. Cysteine protease that cleaves the cell wall of its host methanogen under hydrogen limitation of the latter (autolysis). Cleaves the epsilon-Ala-Lys isopeptide bond in the oligopeptides of pseudomurein. The polypeptide is Pseudomurein endoisopeptidase PeiW (peiW) (Methanothermobacter phage psiM100).